We begin with the raw amino-acid sequence, 90 residues long: Probable Fe(2+)-trafficking protein (90 aa).

Belongs to the Fe(2+)-trafficking protein family.

Functionally, could be a mediator in iron transactions between iron acquisition and iron-requiring processes, such as synthesis and/or repair of Fe-S clusters in biosynthetic enzymes. This is Probable Fe(2+)-trafficking protein from Azotobacter vinelandii (strain DJ / ATCC BAA-1303).